Here is a 432-residue protein sequence, read N- to C-terminus: 3-phosphoshikimate 1-carboxyvinyltransferase (432 aa).

3-phosphoshikimate is bound by residues Lys25, Ser26, and Arg30. Lys25 contacts phosphoenolpyruvate. Positions 97 and 125 each coordinate phosphoenolpyruvate. 3-phosphoshikimate is bound by residues Ser170, Gln172, Asp318, and Lys345. Gln172 provides a ligand contact to phosphoenolpyruvate. Catalysis depends on Asp318, which acts as the Proton acceptor. Phosphoenolpyruvate-binding residues include Arg349 and Arg393.

The protein belongs to the EPSP synthase family. In terms of assembly, monomer.

The protein resides in the cytoplasm. The enzyme catalyses 3-phosphoshikimate + phosphoenolpyruvate = 5-O-(1-carboxyvinyl)-3-phosphoshikimate + phosphate. It functions in the pathway metabolic intermediate biosynthesis; chorismate biosynthesis; chorismate from D-erythrose 4-phosphate and phosphoenolpyruvate: step 6/7. Its function is as follows. Catalyzes the transfer of the enolpyruvyl moiety of phosphoenolpyruvate (PEP) to the 5-hydroxyl of shikimate-3-phosphate (S3P) to produce enolpyruvyl shikimate-3-phosphate and inorganic phosphate. The chain is 3-phosphoshikimate 1-carboxyvinyltransferase from Geobacillus thermodenitrificans (strain NG80-2).